The chain runs to 396 residues: DNA polymerase IV (396 aa).

Positions 6 to 186 constitute a UmuC domain; it reads IIHVDMDAFY…LPISRLWGVG (181 aa). Positions 10 and 104 each coordinate Mg(2+). Glutamate 105 is a catalytic residue.

It belongs to the DNA polymerase type-Y family. Monomer. Requires Mg(2+) as cofactor.

The protein resides in the cytoplasm. The catalysed reaction is DNA(n) + a 2'-deoxyribonucleoside 5'-triphosphate = DNA(n+1) + diphosphate. Its function is as follows. Poorly processive, error-prone DNA polymerase involved in untargeted mutagenesis. Copies undamaged DNA at stalled replication forks, which arise in vivo from mismatched or misaligned primer ends. These misaligned primers can be extended by PolIV. Exhibits no 3'-5' exonuclease (proofreading) activity. May be involved in translesional synthesis, in conjunction with the beta clamp from PolIII. The protein is DNA polymerase IV of Desulfatibacillum aliphaticivorans.